Consider the following 153-residue polypeptide: Ribonuclease H (153 aa).

The RNase H type-1 domain occupies 1-141 (MKHVHIFTDG…ADELARKGME (141 aa)). Residues D9, E47, D69, and D133 each contribute to the Mg(2+) site. The segment at 123 to 153 (HAGHPENERADELARKGMEPFKKARRADAVK) is disordered. The span at 125 to 153 (GHPENERADELARKGMEPFKKARRADAVK) shows a compositional bias: basic and acidic residues.

The protein belongs to the RNase H family. In terms of assembly, monomer. It depends on Mg(2+) as a cofactor.

The protein localises to the cytoplasm. It catalyses the reaction Endonucleolytic cleavage to 5'-phosphomonoester.. Its function is as follows. Endonuclease that specifically degrades the RNA of RNA-DNA hybrids. This Rhizobium meliloti (strain 1021) (Ensifer meliloti) protein is Ribonuclease H.